The sequence spans 512 residues: Sucrose transport protein SUC5 (512 aa).

Positions 1 to 27 (MGALEAERAANNATALETQSSPEDLGQ) are disordered. Residues 1-33 (MGALEAERAANNATALETQSSPEDLGQPSPLRK) are Cytoplasmic-facing. Residues 11-22 (NNATALETQSSP) are compositionally biased toward polar residues. Phosphoserine is present on serine 20. Residues 34–54 (IISVASIAAGVQFGWALQLSL) form a helical membrane-spanning segment. Over 55-67 (LTPYIQLLGIPHK) the chain is Extracellular. Residues 68-88 (WSSYMWLCGPISGMIVQPIVG) form a helical membrane-spanning segment. At 89–102 (YHSDRCESRFGRRR) the chain is on the cytoplasmic side. Residues 103 to 123 (PFIAAGVALVAVSVFLIGFAA) traverse the membrane as a helical segment. The Extracellular portion of the chain corresponds to 124–140 (DMGHSFGDKLENKVRTR). Residues 141 to 161 (AIIIFLTGFWFLDVANNTLQG) traverse the membrane as a helical segment. The Cytoplasmic portion of the chain corresponds to 162–179 (PCRAFLADLAAGDAKKTR). A helical membrane pass occupies residues 180 to 200 (VANACFSFFMAVGNVLGYAAG). Over 201 to 225 (SYTNLHKMFPFTMTKACDIYCANLK) the chain is Extracellular. Residues 226–246 (TCFFLSITLLLIVTFSSLWYV) form a helical membrane-spanning segment. Topologically, residues 247–281 (KDKQWSPPQGDKEEKTSSLFFFGEIFGAVRHMKRP) are cytoplasmic. The chain crosses the membrane as a helical span at residues 282 to 302 (MVMLLIVTVINWIAWFPFILY). Residues 303–333 (DTDWMGREVYGGNSDGDERSKKLYDQGVQAG) lie on the Extracellular side of the membrane. A helical membrane pass occupies residues 334 to 354 (ALGLMFNSILLGFVSLGVESI). Residues 355-363 (GRKMGGAKR) are Cytoplasmic-facing. Residues 364–384 (LWGCVNFILAIGLAMTVLVTK) form a helical membrane-spanning segment. The Extracellular portion of the chain corresponds to 385–406 (SAEHHREIAGPLAGPSSGIKAG). A helical membrane pass occupies residues 407–427 (VFSLFTVLGIPLAITYSIPFA). The Cytoplasmic portion of the chain corresponds to 428–440 (LASIFSTNSGAGQ). Residues 441 to 461 (GLSLGVLNIAICIPQMIVSFS) form a helical membrane-spanning segment. The Extracellular portion of the chain corresponds to 462 to 473 (SGPLDAQFGGGN). The chain crosses the membrane as a helical span at residues 474-494 (LPSFVVGAIAAAVSGVLALTV). Over 495-512 (LPSPPPDAPAMSGAMGFH) the chain is Cytoplasmic.

Belongs to the glycoside-pentoside-hexuronide (GPH) cation symporter transporter (TC 2.A.2.4) family. Widely expressed. Expressed in the endosperm and on the epidermis of the outer surface of the cotyledons of torpedo-stage or older embryos.

The protein localises to the cell membrane. It catalyses the reaction sucrose(out) + H(+)(out) = sucrose(in) + H(+)(in). Its pathway is glycan biosynthesis; sucrose metabolism. Its activity is regulated as follows. Inhibited by protonophores (e.g. carbonyl cyanide m-chlorophenyl-hydrazone (CCCP)) and SH group inhibitors (e.g. p-chloromercuribenzene sulphonic acid (PCMBS)). In terms of biological role, responsible in a heterologous system for the transport of sucrose into the cell, with the concomitant uptake of protons (symport system). Can also transport biotin, and probably maltose at a lesser rate. In planta, the role of SUC5 for the transport of sucrose seems to be negligible. Plays a role in the nutrition of the filial tissues during early seed development and is probably involved in the import of biotin into the endosperm and the embryo epidermis. This Arabidopsis thaliana (Mouse-ear cress) protein is Sucrose transport protein SUC5.